Reading from the N-terminus, the 400-residue chain is CCA-adding enzyme (400 aa).

ATP contacts are provided by Gly32 and Arg35. Gly32 and Arg35 together coordinate CTP. Asp45 and Asp47 together coordinate Mg(2+). ATP is bound by residues Arg116, Asp159, Arg162, Arg165, and Arg168. Residues Arg116, Asp159, Arg162, Arg165, and Arg168 each contribute to the CTP site.

It belongs to the tRNA nucleotidyltransferase/poly(A) polymerase family. Bacterial CCA-adding enzyme type 3 subfamily. Homodimer. Requires Mg(2+) as cofactor.

The enzyme catalyses a tRNA precursor + 2 CTP + ATP = a tRNA with a 3' CCA end + 3 diphosphate. It carries out the reaction a tRNA with a 3' CCA end + 2 CTP + ATP = a tRNA with a 3' CCACCA end + 3 diphosphate. Its function is as follows. Catalyzes the addition and repair of the essential 3'-terminal CCA sequence in tRNAs without using a nucleic acid template. Adds these three nucleotides in the order of C, C, and A to the tRNA nucleotide-73, using CTP and ATP as substrates and producing inorganic pyrophosphate. tRNA 3'-terminal CCA addition is required both for tRNA processing and repair. Also involved in tRNA surveillance by mediating tandem CCA addition to generate a CCACCA at the 3' terminus of unstable tRNAs. While stable tRNAs receive only 3'-terminal CCA, unstable tRNAs are marked with CCACCA and rapidly degraded. The sequence is that of CCA-adding enzyme from Limosilactobacillus fermentum (strain NBRC 3956 / LMG 18251) (Lactobacillus fermentum).